A 218-amino-acid chain; its full sequence is Thiopurine S-methyltransferase (218 aa).

S-adenosyl-L-methionine contacts are provided by Trp10, Leu45, Glu66, and Arg123.

Belongs to the class I-like SAM-binding methyltransferase superfamily. TPMT family.

The protein localises to the cytoplasm. It carries out the reaction S-adenosyl-L-methionine + a thiopurine = S-adenosyl-L-homocysteine + a thiopurine S-methylether.. This Pseudomonas aeruginosa (strain LESB58) protein is Thiopurine S-methyltransferase.